We begin with the raw amino-acid sequence, 396 residues long: Pectinesterase (396 aa).

The first 21 residues, methionine 1 to alanine 21, serve as a signal peptide directing secretion. Threonine 174 serves as a coordination point for substrate. Aspartate 232 acts as the Proton donor in catalysis. Aspartate 259 serves as the catalytic Nucleophile. The substrate site is built by arginine 324 and tryptophan 326.

Belongs to the pectinesterase family.

The protein localises to the secreted. The enzyme catalyses [(1-&gt;4)-alpha-D-galacturonosyl methyl ester](n) + n H2O = [(1-&gt;4)-alpha-D-galacturonosyl](n) + n methanol + n H(+). It functions in the pathway glycan metabolism; pectin degradation; 2-dehydro-3-deoxy-D-gluconate from pectin: step 1/5. Functionally, involved in maceration and soft-rotting of plant tissue. The polypeptide is Pectinesterase (pme) (Ralstonia nicotianae (strain ATCC BAA-1114 / GMI1000) (Ralstonia solanacearum)).